A 208-amino-acid chain; its full sequence is Type 4 adapter protein LvgA (208 aa).

The segment at 184-208 (GYGYPPESPRENYKHPVSSATTARK) is disordered.

As to quaternary structure, the T4BSS is a complex nanomachine composed of several subcomplexes. This subunit is part of the Type IV Coupling Complex (T4CC), a subcomplex composed of the DotLMNYZ core and the IcmSW-LvgA adapter subunits, linked by the C-terminal tail of DotL.

It localises to the cytoplasm. Functionally, component of the Dot/Icm type IVB secretion system (T4BSS), which is used to inject bacterial effector proteins into eukaryotic host cells. Part of a subcomplex which recruits effector proteins and delivers them to the core transmembrane subcomplex. Is a critical subunit for binding a subset of effector proteins. Recognizes more than one type of binding motif. May be a critical factor that confers host specificity. Necessary for full virulence of the bacterium in guinea pigs and presumably humans. The polypeptide is Type 4 adapter protein LvgA (Legionella pneumophila).